The sequence spans 432 residues: Tol-Pal system protein TolB (432 aa).

An N-terminal signal peptide occupies residues 1–29 (MMRNVWKSGLRRSAWIGLLMVLCVGVARA).

This sequence belongs to the TolB family. In terms of assembly, the Tol-Pal system is composed of five core proteins: the inner membrane proteins TolA, TolQ and TolR, the periplasmic protein TolB and the outer membrane protein Pal. They form a network linking the inner and outer membranes and the peptidoglycan layer.

Its subcellular location is the periplasm. Its function is as follows. Part of the Tol-Pal system, which plays a role in outer membrane invagination during cell division and is important for maintaining outer membrane integrity. In Ralstonia nicotianae (strain ATCC BAA-1114 / GMI1000) (Ralstonia solanacearum), this protein is Tol-Pal system protein TolB.